The sequence spans 294 residues: Endolytic peptidoglycan transglycosylase RlpA (294 aa).

A signal peptide spans 1–23 (MKQKIFQILTALCCIFYVMSAQA). In terms of domain architecture, SPOR spans 216 to 291 (EKYTTVYKIR…NYSKPLIVYT (76 aa)).

This sequence belongs to the RlpA family.

Lytic transglycosylase with a strong preference for naked glycan strands that lack stem peptides. The chain is Endolytic peptidoglycan transglycosylase RlpA from Pasteurella multocida (strain Pm70).